Here is a 317-residue protein sequence, read N- to C-terminus: Ribosomal protein L11 methyltransferase (317 aa).

S-adenosyl-L-methionine-binding residues include Thr-158, Gly-179, Asp-201, and Asn-244.

Belongs to the methyltransferase superfamily. PrmA family.

Its subcellular location is the cytoplasm. It catalyses the reaction L-lysyl-[protein] + 3 S-adenosyl-L-methionine = N(6),N(6),N(6)-trimethyl-L-lysyl-[protein] + 3 S-adenosyl-L-homocysteine + 3 H(+). In terms of biological role, methylates ribosomal protein L11. The polypeptide is Ribosomal protein L11 methyltransferase (Streptococcus agalactiae serotype Ia (strain ATCC 27591 / A909 / CDC SS700)).